Reading from the N-terminus, the 776-residue chain is K(+) efflux antiporter 3, chloroplastic (776 aa).

Residues 1–72 (MAISTMLGSI…KVFLDTSKRF (72 aa)) constitute a chloroplast transit peptide. Residues 73 to 93 (YFQGRWSESSGRRVETYAGVD) are Lumenal, thylakoid-facing. Residues 94 to 114 (VASAVDVINDLGFDTLTFLMV) form a helical membrane-spanning segment. A topological domain (stromal) is located at residue Thr115. Residues 116–136 (VIIVPAFRILKASPILGFFFA) traverse the membrane as a helical segment. The Lumenal, thylakoid segment spans residues 137 to 153 (GVVLNQFGLIRNLTDVK). The helical transmembrane segment at 154-174 (VLSEWGILFLLFEMGLELSLA) threads the bilayer. The Stromal segment spans residues 175 to 181 (RLKALAK). Residues 182–202 (FAFGMGLTQVLLCTAAFTAFE) traverse the membrane as a helical segment. Topologically, residues 203–232 (LPPNGAIGTKILEFLFHSRPDLVNIRSIDE) are lumenal, thylakoid. A helical membrane pass occupies residues 233-253 (AVVIGAALSLSSSAFVLQLLA). Residues 254 to 266 (EKGELPTRFGSAT) are Stromal-facing. A helical membrane pass occupies residues 267–287 (LGILLLQDIAVVPLLVILPVL). Topologically, residues 288–296 (ESQDIGGES) are lumenal, thylakoid. A helical transmembrane segment spans residues 297–317 (IWPMLAKESAKALGGLGILSL). At 318 to 338 (GGKFFLRRIFEVVAETRSSEA) the chain is on the stromal side. Residues 339–359 (FVALCLLTVAGTSLVTQWLGF) traverse the membrane as a helical segment. Residues 360 to 389 (SDTLGAFLAGALLAETNFRTQIEADIRPFR) are Lumenal, thylakoid-facing. A helical transmembrane segment spans residues 390–410 (GLLLGLFFVTTGTSIDMEVLF). Residues 411 to 415 (REWPN) lie on the Stromal side of the membrane. Residues 416 to 436 (VLSLLGGLIVIKTLIITAIGP) form a helical membrane-spanning segment. Over 437–445 (RVGLTIQES) the chain is Lumenal, thylakoid. Residues 446–466 (VRVGFLLSQGGEFAFVVFSLA) form a helical membrane-spanning segment. Topologically, residues 467–468 (NR) are stromal. The helical transmembrane segment at 469–489 (LGVLPNELNKLLIIVVVLSMA) threads the bilayer. Residues 490-526 (LTPYLNQLGRKAADFLDERLDPGEKIGEDVNFDVSES) are Lumenal, thylakoid-facing. Residues 524–649 (SESIVIIGFG…KKAGATDAIL (126 aa)) form the RCK N-terminal domain. A helical membrane pass occupies residues 527–547 (IVIIGFGQMGQVLANFLSTPL). Residues 548–776 (VSDSDLVGWP…FVGKADKAQD (229 aa)) lie on the Stromal side of the membrane. Residues 728 to 776 (MQMKASDSNSDSAAEILQETAGLSQPPEIDDSSVNIDNGFVGKADKAQD) form a disordered region.

It belongs to the monovalent cation:proton antiporter 2 (CPA2) transporter (TC 2.A.37) family. KEA (TC 2.A.37.1) subfamily. As to expression, expressed at low levels in flowers, siliques and leaves. Expressed at low levels in flowers and leaves. In terms of tissue distribution, most abundant splice form in all organs, including siliques, flowers, leaves and roots. Preferentially expressed in photosynthetically active tissues, including seedling cotyledons and mature leaves. As to expression, expressed in shoots and roots.

Its subcellular location is the plastid. The protein localises to the chloroplast membrane. The protein resides in the golgi apparatus membrane. It localises to the chloroplast thylakoid membrane. The catalysed reaction is K(+)(in) + H(+)(out) = K(+)(out) + H(+)(in). Its activity is regulated as follows. Regulated by a mechanism involving lumenal C-terminus region; a fine-tuned balance between photoprotective energy dissipation in high light and a maximum quantum yield in low light involves a reduced activity under high light. Functionally, electroneutral K(+)/H(+) efflux antiporter assuring proton efflux from the thylakoid lumen to the plastid stroma, thus increasing the membrane potential at the expense of the proton gradient (delta pH) component of the proton motive force (PMF). Promotes photosynthesis and growth in conditions where the chloroplast (cp)ATP synthase activity is low (e.g. cgl160 mutant background) by reducing the pH gradient across the thylakoid membrane. Accelerates photosynthetic acclimation in fluctuating light environments by modulating two components of the proton motive force, the proton gradient and the electric potential (delta Psi). Promotes the relaxation of photoprotective energy-dependent non-photochemical quenching (NPQ) after transitions from high to low light, thus enhancing photosystem II (PSII) quantum efficiency in fluctuating light. On transition from high to low light, slows down photoprotection by dissipating the pH gradient across the thylakoid membrane. During photosynthetic response on transition from dark to low light, involved in a sequential mechanism of adaptation; VCCN1 and CLCe first trigger the activation of photoprotection, which is later down-regulated by KEA3 to a low steady state, while adjusting electron transport. Together with the chloroplast NADH dehydrogenase-like (NDH) complex, maximizes photosynthesis efficiency after a long dark adaptation. Required in roots for rapid hyperosmotic-induced Ca(2+) responses and for osmo-sensory potentiation in hyperosmotic conditions. In terms of biological role, low K(+)/H(+) efflux antiporter activity. Its function is as follows. Low K(+)/H(+) efflux antiporter activity. Promotes non-photochemical quenching (NPQ) in high light conditions. In Arabidopsis thaliana (Mouse-ear cress), this protein is K(+) efflux antiporter 3, chloroplastic.